Reading from the N-terminus, the 276-residue chain is Formamidopyrimidine-DNA glycosylase (276 aa).

Pro-2 acts as the Schiff-base intermediate with DNA in catalysis. Glu-3 functions as the Proton donor in the catalytic mechanism. Lys-58 (proton donor; for beta-elimination activity) is an active-site residue. The DNA site is built by His-92, Arg-111, and Arg-153. Residues 238 to 272 (TVYGRERQNCLNCSSTIIKTKHSGRSTFYCRTCQY) form an FPG-type zinc finger. The active-site Proton donor; for delta-elimination activity is the Arg-262.

Belongs to the FPG family. Monomer. Zn(2+) is required as a cofactor.

The catalysed reaction is Hydrolysis of DNA containing ring-opened 7-methylguanine residues, releasing 2,6-diamino-4-hydroxy-5-(N-methyl)formamidopyrimidine.. It carries out the reaction 2'-deoxyribonucleotide-(2'-deoxyribose 5'-phosphate)-2'-deoxyribonucleotide-DNA = a 3'-end 2'-deoxyribonucleotide-(2,3-dehydro-2,3-deoxyribose 5'-phosphate)-DNA + a 5'-end 5'-phospho-2'-deoxyribonucleoside-DNA + H(+). Its function is as follows. Involved in base excision repair of DNA damaged by oxidation or by mutagenic agents. Acts as a DNA glycosylase that recognizes and removes damaged bases. Has a preference for oxidized purines, such as 7,8-dihydro-8-oxoguanine (8-oxoG). Has AP (apurinic/apyrimidinic) lyase activity and introduces nicks in the DNA strand. Cleaves the DNA backbone by beta-delta elimination to generate a single-strand break at the site of the removed base with both 3'- and 5'-phosphates. In Rickettsia felis (strain ATCC VR-1525 / URRWXCal2) (Rickettsia azadi), this protein is Formamidopyrimidine-DNA glycosylase.